The primary structure comprises 164 residues: Thiol peroxidase (164 aa).

The Thioredoxin domain occupies 18–163; it reads VNEGDIAPNF…FEAALKAYRN (146 aa). Residue cysteine 60 is the Cysteine sulfenic acid (-SOH) intermediate of the active site. Cysteines 60 and 93 form a disulfide.

Belongs to the peroxiredoxin family. Tpx subfamily. Homodimer.

It carries out the reaction a hydroperoxide + [thioredoxin]-dithiol = an alcohol + [thioredoxin]-disulfide + H2O. Thiol-specific peroxidase that catalyzes the reduction of hydrogen peroxide and organic hydroperoxides to water and alcohols, respectively. Plays a role in cell protection against oxidative stress by detoxifying peroxides. The chain is Thiol peroxidase from Staphylococcus epidermidis (strain ATCC 35984 / DSM 28319 / BCRC 17069 / CCUG 31568 / BM 3577 / RP62A).